We begin with the raw amino-acid sequence, 434 residues long: Serine hydroxymethyltransferase 1 (434 aa).

(6S)-5,6,7,8-tetrahydrofolate contacts are provided by residues Leu136 and 140–142 (GHL). Lys245 carries the post-translational modification N6-(pyridoxal phosphate)lysine.

It belongs to the SHMT family. As to quaternary structure, homodimer. Requires pyridoxal 5'-phosphate as cofactor.

It localises to the cytoplasm. It carries out the reaction (6R)-5,10-methylene-5,6,7,8-tetrahydrofolate + glycine + H2O = (6S)-5,6,7,8-tetrahydrofolate + L-serine. Its pathway is one-carbon metabolism; tetrahydrofolate interconversion. It participates in amino-acid biosynthesis; glycine biosynthesis; glycine from L-serine: step 1/1. In terms of biological role, catalyzes the reversible interconversion of serine and glycine with tetrahydrofolate (THF) serving as the one-carbon carrier. This reaction serves as the major source of one-carbon groups required for the biosynthesis of purines, thymidylate, methionine, and other important biomolecules. Also exhibits THF-independent aldolase activity toward beta-hydroxyamino acids, producing glycine and aldehydes, via a retro-aldol mechanism. The protein is Serine hydroxymethyltransferase 1 of Rhodospirillum rubrum (strain ATCC 11170 / ATH 1.1.1 / DSM 467 / LMG 4362 / NCIMB 8255 / S1).